The following is a 90-amino-acid chain: Auxin-responsive protein SAUR24 (90 aa).

It belongs to the ARG7 family.

The protein resides in the cell membrane. Functionally, functions as a positive effector of cell expansion through modulation of auxin transport. The sequence is that of Auxin-responsive protein SAUR24 from Arabidopsis thaliana (Mouse-ear cress).